We begin with the raw amino-acid sequence, 103 residues long: Large ribosomal subunit protein uL24 (103 aa).

This sequence belongs to the universal ribosomal protein uL24 family. As to quaternary structure, part of the 50S ribosomal subunit.

Its function is as follows. One of two assembly initiator proteins, it binds directly to the 5'-end of the 23S rRNA, where it nucleates assembly of the 50S subunit. Functionally, one of the proteins that surrounds the polypeptide exit tunnel on the outside of the subunit. In Halalkalibacterium halodurans (strain ATCC BAA-125 / DSM 18197 / FERM 7344 / JCM 9153 / C-125) (Bacillus halodurans), this protein is Large ribosomal subunit protein uL24.